Here is a 202-residue protein sequence, read N- to C-terminus: Nascent polypeptide-associated complex subunit alpha (202 aa).

The span at 1–19 (MADPRVEEIVEEETPKQTV) shows a compositional bias: basic and acidic residues. Residues 1-41 (MADPRVEEIVEEETPKQTVEDAGSDSESEAGEANIPAGAAV) form a disordered region. Residues 45–110 (SRNEKKARKA…AKIEDLNSQA (66 aa)) enclose the NAC-A/B domain. Residues 117 to 127 (QLAAAEAAAGE) are compositionally biased toward low complexity. The segment at 117 to 165 (QLAAAEAAAGEHAGHDHEHDLGTKVPEAETKKEEEEDDGEPVDESGLEA) is disordered. Over residues 128–149 (HAGHDHEHDLGTKVPEAETKKE) the composition is skewed to basic and acidic residues. The segment covering 150-162 (EEEDDGEPVDESG) has biased composition (acidic residues). Positions 163-202 (LEAKDIELVMAQANVSRKKAVKALRENDNDIVNSIMALSI) constitute a UBA domain.

It belongs to the NAC-alpha family. In terms of assembly, part of the nascent polypeptide-associated complex (NAC), consisting of egd2 and egd1. NAC associates with ribosomes via egd1.

It is found in the cytoplasm. The protein resides in the nucleus. Component of the nascent polypeptide-associated complex (NAC), a dynamic component of the ribosomal exit tunnel, protecting the emerging polypeptides from interaction with other cytoplasmic proteins to ensure appropriate nascent protein targeting. The NAC complex also promotes mitochondrial protein import by enhancing productive ribosome interactions with the outer mitochondrial membrane and blocks the inappropriate interaction of ribosomes translating non-secretory nascent polypeptides with translocation sites in the membrane of the endoplasmic reticulum. Egd2 may also be involved in transcription regulation. The chain is Nascent polypeptide-associated complex subunit alpha (egd2) from Aspergillus oryzae (strain ATCC 42149 / RIB 40) (Yellow koji mold).